Here is a 234-residue protein sequence, read N- to C-terminus: Leucyl/phenylalanyl-tRNA--protein transferase (234 aa).

It belongs to the L/F-transferase family.

It is found in the cytoplasm. It catalyses the reaction N-terminal L-lysyl-[protein] + L-leucyl-tRNA(Leu) = N-terminal L-leucyl-L-lysyl-[protein] + tRNA(Leu) + H(+). The catalysed reaction is N-terminal L-arginyl-[protein] + L-leucyl-tRNA(Leu) = N-terminal L-leucyl-L-arginyl-[protein] + tRNA(Leu) + H(+). The enzyme catalyses L-phenylalanyl-tRNA(Phe) + an N-terminal L-alpha-aminoacyl-[protein] = an N-terminal L-phenylalanyl-L-alpha-aminoacyl-[protein] + tRNA(Phe). Its function is as follows. Functions in the N-end rule pathway of protein degradation where it conjugates Leu, Phe and, less efficiently, Met from aminoacyl-tRNAs to the N-termini of proteins containing an N-terminal arginine or lysine. The chain is Leucyl/phenylalanyl-tRNA--protein transferase from Escherichia coli O157:H7 (strain EC4115 / EHEC).